A 520-amino-acid polypeptide reads, in one-letter code: MASVAHISTAKAIFRAGGLPCRRLITPTLTGLPLKTHRMNSTTPTYHLIPKGGKHGEFRQESDTFGPIQVPAEKYWGAQTQRSLQNFRIGGEKERLPLPLVRAFGVLKRAAASVNREFGLDPKLADAIEQAAQEVIDGRLDDNFPLVVFQTGSGTQSNMNSNEVIANRAIEILGGTLGSKKPVHPNDHVNMSQSSNDTFPTVMHIASVLQIHTHLLPAMKHLHRALKGKEEEFKNIIKIGRTHMQDATPLSLGQEFSGYVTQVGYGIERINNALPRLCLLAQGGTAVGTGLNTFEGFDVKVAEKVSKLTNIEFKTAPNKFEALAAHDAIVEMSGALNVIACSLMKIANDIRQLGSGPRCGLGELILPANEPGSSIMPGKVNPTQCEALTMVCAQVMGNHATITVAGASGHCELNVFKPLLAKNILSSIRLLGDACESFTDHCVVGIEPNYEGIARHLRDSLMLVTALNPHIGYDNCAKIAKTALKNKSTLKHEFVTLGFGTPEQFDEWVRPELMISAKKV.

The N-terminal 39 residues, 1-39, are a transit peptide targeting the mitochondrion; sequence MASVAHISTAKAIFRAGGLPCRRLITPTLTGLPLKTHRM. Substrate contacts are provided by residues 153–155, 184–187, 194–196, and threonine 242; these read SGT, HPND, and SSN. The Proton donor/acceptor role is filled by histidine 243. Serine 373 is a catalytic residue. Residues serine 374 and 379–381 each bind substrate; that span reads KVN.

The protein belongs to the class-II fumarase/aspartase family. Fumarase subfamily. Homotetramer.

The protein resides in the mitochondrion matrix. The protein localises to the cytoplasm. It is found in the nucleus. It catalyses the reaction (S)-malate = fumarate + H2O. Its pathway is carbohydrate metabolism; tricarboxylic acid cycle; (S)-malate from fumarate: step 1/1. Functionally, catalyzes the reversible stereospecific interconversion of fumarate to L-malate. In mitochondrion, catalyzes the hydration of fumarate to L-malate in the tricarboxylic acid (TCA) cycle to facilitate a transition step in the production of energy in the form of NADH. In cytoplasm and nucleus, involved in DNA repair in response to DNA damage: following DNA double-strand breaks (DSBs), translocates from the cytosol to the nucleus and promotes DNA repair by catalyzing the dehydration of L-malate to fumarate. In Schizosaccharomyces pombe (strain 972 / ATCC 24843) (Fission yeast), this protein is Fumarate hydratase, mitochondrial (fum1).